The sequence spans 158 residues: EOLA-like protein (158 aa).

The region spanning 6 to 92 is the ASCH domain; it reads LSFRQPYAGF…IAGLVDIGET (87 aa).

The protein belongs to the EOLA family.

This is EOLA-like protein from Pongo abelii (Sumatran orangutan).